Here is a 313-residue protein sequence, read N- to C-terminus: tRNA dimethylallyltransferase (313 aa).

Position 17–24 (17–24 (GPTASGKT)) interacts with ATP. Substrate is bound at residue 19-24 (TASGKT). Interaction with substrate tRNA regions lie at residues 42–45 (DSAL), 166–170 (QRLSR), 247–252 (RCVGYR), and 280–287 (KRQITWLR).

Belongs to the IPP transferase family. As to quaternary structure, monomer. Requires Mg(2+) as cofactor.

It catalyses the reaction adenosine(37) in tRNA + dimethylallyl diphosphate = N(6)-dimethylallyladenosine(37) in tRNA + diphosphate. Catalyzes the transfer of a dimethylallyl group onto the adenine at position 37 in tRNAs that read codons beginning with uridine, leading to the formation of N6-(dimethylallyl)adenosine (i(6)A). This chain is tRNA dimethylallyltransferase, found in Photorhabdus laumondii subsp. laumondii (strain DSM 15139 / CIP 105565 / TT01) (Photorhabdus luminescens subsp. laumondii).